Here is a 273-residue protein sequence, read N- to C-terminus: Probable ribosomal RNA small subunit methyltransferase A (273 aa).

Asn-26, Leu-28, Gly-53, Glu-74, Asp-98, and Asn-113 together coordinate S-adenosyl-L-methionine.

The protein belongs to the class I-like SAM-binding methyltransferase superfamily. rRNA adenine N(6)-methyltransferase family. RsmA subfamily.

The protein localises to the cytoplasm. Its function is as follows. Specifically dimethylates two adjacent adenosines in the loop of a conserved hairpin near the 3'-end of 16S rRNA in the 30S particle. May play a critical role in biogenesis of 30S subunits. The protein is Probable ribosomal RNA small subunit methyltransferase A of Methanothermobacter thermautotrophicus (strain ATCC 29096 / DSM 1053 / JCM 10044 / NBRC 100330 / Delta H) (Methanobacterium thermoautotrophicum).